Consider the following 383-residue polypeptide: L-lactate dehydrogenase (383 aa).

Residues 1–380 enclose the FMN hydroxy acid dehydrogenase domain; the sequence is MIIASTFDYR…TCESLVNTDA (380 aa). Tyrosine 24 lines the substrate pocket. The FMN site is built by serine 106 and glutamine 127. Tyrosine 129 serves as a coordination point for substrate. Position 155 (threonine 155) interacts with FMN. Residue arginine 164 coordinates substrate. Position 251 (lysine 251) interacts with FMN. Histidine 275 (proton acceptor) is an active-site residue. Arginine 278 contacts substrate. Residue 306–330 participates in FMN binding; that stretch reads DSGVRSGLDVVRMIAQGADAVMIGR.

It belongs to the FMN-dependent alpha-hydroxy acid dehydrogenase family. Requires FMN as cofactor.

Its subcellular location is the cell inner membrane. The enzyme catalyses (S)-lactate + A = pyruvate + AH2. Its function is as follows. Catalyzes the conversion of L-lactate to pyruvate. Is coupled to the respiratory chain. This chain is L-lactate dehydrogenase, found in Bartonella tribocorum (strain CIP 105476 / IBS 506).